We begin with the raw amino-acid sequence, 250 residues long: Octanoyltransferase (250 aa).

Residues 44-224 (GAGSDRLLLL…AVVQALNGDL (181 aa)) form the BPL/LPL catalytic domain. Residues 82–89 (RGGKITWH), 154–156 (AIG), and 167–169 (GIS) each bind substrate. C185 serves as the catalytic Acyl-thioester intermediate. A disordered region spans residues 224 to 250 (LPVRDHDLPRPGTTPAAPNSTRVRSMT). The segment covering 239–250 (AAPNSTRVRSMT) has biased composition (polar residues).

This sequence belongs to the LipB family.

Its subcellular location is the cytoplasm. The catalysed reaction is octanoyl-[ACP] + L-lysyl-[protein] = N(6)-octanoyl-L-lysyl-[protein] + holo-[ACP] + H(+). The protein operates within protein modification; protein lipoylation via endogenous pathway; protein N(6)-(lipoyl)lysine from octanoyl-[acyl-carrier-protein]: step 1/2. Catalyzes the transfer of endogenously produced octanoic acid from octanoyl-acyl-carrier-protein onto the lipoyl domains of lipoate-dependent enzymes. Lipoyl-ACP can also act as a substrate although octanoyl-ACP is likely to be the physiological substrate. The polypeptide is Octanoyltransferase (Nocardia farcinica (strain IFM 10152)).